A 345-amino-acid chain; its full sequence is NADH-ubiquinone oxidoreductase chain 2 (345 aa).

The next 9 membrane-spanning stretches (helical) occupy residues M1–M21, F60–L80, P110–I130, I149–G169, M179–I196, L200–T222, T240–F260, N274–L294, and T323–M343.

The protein belongs to the complex I subunit 2 family.

It is found in the mitochondrion inner membrane. The catalysed reaction is a ubiquinone + NADH + 5 H(+)(in) = a ubiquinol + NAD(+) + 4 H(+)(out). In terms of biological role, core subunit of the mitochondrial membrane respiratory chain NADH dehydrogenase (Complex I) that is believed to belong to the minimal assembly required for catalysis. Complex I functions in the transfer of electrons from NADH to the respiratory chain. The immediate electron acceptor for the enzyme is believed to be ubiquinone. The polypeptide is NADH-ubiquinone oxidoreductase chain 2 (MT-ND2) (Varanus melinus (Quince monitor lizard)).